A 541-amino-acid polypeptide reads, in one-letter code: Eukaryotic translation initiation factor 3 subunit L (541 aa).

One can recognise a PCI domain in the interval 308 to 516 (TFSDILLYIQ…IHIADTKVSH (209 aa)).

Belongs to the eIF-3 subunit L family. As to quaternary structure, component of the eukaryotic translation initiation factor 3 (eIF-3) complex. The eIF-3 complex interacts with pix.

The protein resides in the cytoplasm. Component of the eukaryotic translation initiation factor 3 (eIF-3) complex, which is involved in protein synthesis of a specialized repertoire of mRNAs and, together with other initiation factors, stimulates binding of mRNA and methionyl-tRNAi to the 40S ribosome. The eIF-3 complex specifically targets and initiates translation of a subset of mRNAs involved in cell proliferation. The polypeptide is Eukaryotic translation initiation factor 3 subunit L (Drosophila persimilis (Fruit fly)).